Here is a 233-residue protein sequence, read N- to C-terminus: Uracil-DNA glycosylase (233 aa).

Aspartate 70 (proton acceptor) is an active-site residue.

This sequence belongs to the uracil-DNA glycosylase (UDG) superfamily. UNG family.

Its subcellular location is the cytoplasm. The catalysed reaction is Hydrolyzes single-stranded DNA or mismatched double-stranded DNA and polynucleotides, releasing free uracil.. In terms of biological role, excises uracil residues from the DNA which can arise as a result of misincorporation of dUMP residues by DNA polymerase or due to deamination of cytosine. The polypeptide is Uracil-DNA glycosylase (Helicobacter pylori (strain HPAG1)).